Here is a 318-residue protein sequence, read N- to C-terminus: Xanthocillin biosynthesis cluster transcription factor xanC (318 aa).

The segment covering 1 to 27 (MHSQTTKDEQSKDDSSNEKQDAIERRR) has biased composition (basic and acidic residues). The tract at residues 1–39 (MHSQTTKDEQSKDDSSNEKQDAIERRRLQNRLSQRNHRR) is disordered. Positions 20 to 52 (QDAIERRRLQNRLSQRNHRRKIRDRIAKLQERV) constitute a bZIP domain. Residues 25–40 (RRRLQNRLSQRNHRRK) are basic motif. A leucine-zipper region spans residues 41 to 48 (IRDRIAKL). Disordered stretches follow at residues 71-107 (PPAA…QRNV), 123-171 (PSSS…FSLD), and 269-318 (GRHC…SMML). 2 stretches are compositionally biased toward low complexity: residues 123–139 (PSSS…PFDL) and 147–171 (STNS…FSLD). Residues 293–318 (APSSTPFCPLHPSQSSSLDNYQSMML) show a composition bias toward polar residues.

Belongs to the bZIP family.

The protein resides in the nucleus. Transcription regulator that specifically up-regulates the gene cluster that mediates the biosynthesis of the isocyanide xanthocillin and its derivatives. This is Xanthocillin biosynthesis cluster transcription factor xanC from Aspergillus fumigatus (strain ATCC MYA-4609 / CBS 101355 / FGSC A1100 / Af293) (Neosartorya fumigata).